Here is a 283-residue protein sequence, read N- to C-terminus: 4-diphosphocytidyl-2-C-methyl-D-erythritol kinase (283 aa).

Lys12 is an active-site residue. ATP is bound at residue 99–109 (PLAAGIGGGSA). Asp141 is an active-site residue.

It belongs to the GHMP kinase family. IspE subfamily.

The catalysed reaction is 4-CDP-2-C-methyl-D-erythritol + ATP = 4-CDP-2-C-methyl-D-erythritol 2-phosphate + ADP + H(+). It functions in the pathway isoprenoid biosynthesis; isopentenyl diphosphate biosynthesis via DXP pathway; isopentenyl diphosphate from 1-deoxy-D-xylulose 5-phosphate: step 3/6. Catalyzes the phosphorylation of the position 2 hydroxy group of 4-diphosphocytidyl-2C-methyl-D-erythritol. The chain is 4-diphosphocytidyl-2-C-methyl-D-erythritol kinase from Sphingopyxis alaskensis (strain DSM 13593 / LMG 18877 / RB2256) (Sphingomonas alaskensis).